Reading from the N-terminus, the 106-residue chain is Urease subunit beta (106 aa).

The protein belongs to the urease beta subunit family. In terms of assembly, heterotrimer of UreA (gamma), UreB (beta) and UreC (alpha) subunits. Three heterotrimers associate to form the active enzyme.

It localises to the cytoplasm. The enzyme catalyses urea + 2 H2O + H(+) = hydrogencarbonate + 2 NH4(+). Its pathway is nitrogen metabolism; urea degradation; CO(2) and NH(3) from urea (urease route): step 1/1. In Prochlorococcus marinus (strain NATL1A), this protein is Urease subunit beta.